The sequence spans 86 residues: Cell division protein ZapA (86 aa).

This sequence belongs to the ZapA family. Type 2 subfamily. In terms of assembly, homodimer. Interacts with FtsZ.

Its subcellular location is the cytoplasm. Functionally, activator of cell division through the inhibition of FtsZ GTPase activity, therefore promoting FtsZ assembly into bundles of protofilaments necessary for the formation of the division Z ring. It is recruited early at mid-cell but it is not essential for cell division. The protein is Cell division protein ZapA of Oceanobacillus iheyensis (strain DSM 14371 / CIP 107618 / JCM 11309 / KCTC 3954 / HTE831).